The chain runs to 60 residues: Large ribosomal subunit protein eL37 (60 aa).

Zn(2+)-binding residues include Cys19, Cys22, Cys34, and Cys37. Residues 19 to 37 form a C4-type zinc finger; sequence CRRCGRISFHAQKKVCSSC.

It belongs to the eukaryotic ribosomal protein eL37 family. It depends on Zn(2+) as a cofactor.

Its function is as follows. Binds to the 23S rRNA. The protein is Large ribosomal subunit protein eL37 of Methanoregula boonei (strain DSM 21154 / JCM 14090 / 6A8).